A 535-amino-acid polypeptide reads, in one-letter code: EH domain-containing protein 3 (535 aa).

An N-acetylmethionine modification is found at methionine 1. Residues 55–286 (FDNKPMVLLV…DLFRDIQSLP (232 aa)) enclose the Dynamin-type G domain. The G1 motif stretch occupies residues 65–72 (GQYSTGKT). ATP is bound at residue 65–72 (GQYSTGKT). A G2 motif region spans residues 91–92 (EP). A G3 motif region spans residues 153–156 (DTPG). The stretch at 198-227 (DEFSEVIKALKNHEDKMRVVLNKADQIETQ) forms a coiled coil. A G4 motif region spans residues 219–222 (NKAD). Residue lysine 220 participates in ATP binding. Position 243 (isoleucine 243) is a region of interest, G5 motif. Tryptophan 258 provides a ligand contact to ATP. Residue lysine 315 forms a Glycyl lysine isopeptide (Lys-Gly) (interchain with G-Cter in SUMO) linkage. A phosphoserine mark is found at serine 349 and serine 456. Residues 444–532 (DKPMYDEIFY…AHLLPPSKRK (89 aa)) enclose the EH domain. One can recognise an EF-hand domain in the interval 476–511 (LPNSVLGKIWKLADIDKDGMLDDEEFALANHLIKVK). The Ca(2+) site is built by aspartate 489, aspartate 491, aspartate 493, methionine 495, and glutamate 500. A Glycyl lysine isopeptide (Lys-Gly) (interchain with G-Cter in SUMO) cross-link involves residue lysine 511.

It belongs to the TRAFAC class dynamin-like GTPase superfamily. Dynamin/Fzo/YdjA family. EHD subfamily. As to quaternary structure, homooligomer. Heterooligomer with EHD1. Heterooligomer with EHD2 and EHD4; ATP-binding is required for heterooligomerization. Interacts with PACSIN1. Interacts with PACSIN2. Interacts (via EH domain) with MICALL1. Interacts (via EH domain) with RAB11FIP2. Interacts with ANK2. Interacts with CACNA1GG and CACNA1H. In terms of tissue distribution, strong expression seen in the kidney, brain and liver. In the kidney, expressed exclusively by glomerular endothelial cells; at protein level. Expressed in skeletal muscle neuromuscular junction perisynaptic region; at protein level.

It is found in the recycling endosome membrane. Its subcellular location is the cell membrane. The protein resides in the cell projection. It localises to the cilium membrane. The protein localises to the cytoplasmic vesicle. In terms of biological role, ATP- and membrane-binding protein that controls membrane reorganization/tubulation upon ATP hydrolysis. In vitro causes tubulation of endocytic membranes. Binding to phosphatidic acid induces its membrane tubulation activity. Plays a role in endocytic transport. Involved in early endosome to recycling endosome compartment (ERC), retrograde early endosome to Golgi, and endosome to plasma membrane (rapid recycling) protein transport. Involved in the regulation of Golgi maintenance and morphology. Involved in the recycling of internalized D1 dopamine receptor. Plays a role in cardiac protein trafficking probably implicating ANK2. Involved in the ventricular membrane targeting of SLC8A1 and CACNA1C and probably the atrial membrane localization of CACNA1GG and CACNA1H implicated in the regulation of atrial myocyte excitability and cardiac conduction. In conjunction with EHD4 may be involved in endocytic trafficking of KDR/VEGFR2 implicated in control of glomerular function. Involved in the rapid recycling of integrin beta-3 implicated in cell adhesion maintenance. Involved in the unidirectional retrograde dendritic transport of endocytosed BACE1 and in efficient sorting of BACE1 to axons implicating a function in neuronal APP processing. Plays a role in the formation of the ciliary vesicle, an early step in cilium biogenesis; possibly sharing redundant functions with Ehd1. In Mus musculus (Mouse), this protein is EH domain-containing protein 3.